The sequence spans 68 residues: Putative alpha-conotoxin Qc alphaL-1 (68 aa).

A signal peptide spans 1–21 (MGMRMMFTMFLLVVLATTVVS). Positions 22-49 (INLDHAFDGRNAAANNKATDLMARTVRR) are excised as a propeptide. A disulfide bridge connects residues C51 and C64.

The protein belongs to the conotoxin A superfamily. As to expression, expressed by the venom duct.

Its subcellular location is the secreted. Functionally, alpha-conotoxins act on postsynaptic membranes, they bind to the nicotinic acetylcholine receptors (nAChR) and thus inhibit them. This Conus quercinus (Oak cone) protein is Putative alpha-conotoxin Qc alphaL-1.